We begin with the raw amino-acid sequence, 337 residues long: Dihydroorotate dehydrogenase (quinone) (337 aa).

Residues 62 to 66 (AGLDK) and T86 contribute to the FMN site. Position 66 (K66) interacts with substrate. Position 111-115 (111-115 (NRMGF)) interacts with substrate. The FMN site is built by N140 and N173. N173 provides a ligand contact to substrate. S176 functions as the Nucleophile in the catalytic mechanism. Position 178 (N178) interacts with substrate. 2 residues coordinate FMN: K218 and T246. Substrate is bound at residue 247–248 (NT). FMN contacts are provided by residues G269, G298, and 319-320 (YS).

This sequence belongs to the dihydroorotate dehydrogenase family. Type 2 subfamily. Monomer. FMN is required as a cofactor.

It is found in the cell membrane. It catalyses the reaction (S)-dihydroorotate + a quinone = orotate + a quinol. It participates in pyrimidine metabolism; UMP biosynthesis via de novo pathway; orotate from (S)-dihydroorotate (quinone route): step 1/1. Functionally, catalyzes the conversion of dihydroorotate to orotate with quinone as electron acceptor. This is Dihydroorotate dehydrogenase (quinone) from Wigglesworthia glossinidia brevipalpis.